The chain runs to 46 residues: Bacteriocin acidocin 8912 (46 aa).

Positions 1-20 (MISSHQKTLTDKELALISGG) are excised as a propeptide.

Its subcellular location is the secreted. In terms of biological role, has a bactericidal effect on sensitive cells but not a bacteriolytic effect. This is Bacteriocin acidocin 8912 (acdT) from Lactobacillus acidophilus.